The primary structure comprises 134 residues: ATP synthase epsilon chain (134 aa).

This sequence belongs to the ATPase epsilon chain family. As to quaternary structure, F-type ATPases have 2 components, CF(1) - the catalytic core - and CF(0) - the membrane proton channel. CF(1) has five subunits: alpha(3), beta(3), gamma(1), delta(1), epsilon(1). CF(0) has three main subunits: a, b and c.

It is found in the cellular thylakoid membrane. Produces ATP from ADP in the presence of a proton gradient across the membrane. This Prochlorococcus marinus (strain MIT 9301) protein is ATP synthase epsilon chain.